A 128-amino-acid chain; its full sequence is Holo-[acyl-carrier-protein] synthase (128 aa).

2 residues coordinate Mg(2+): aspartate 8 and glutamate 60.

It belongs to the P-Pant transferase superfamily. AcpS family. The cofactor is Mg(2+).

It localises to the cytoplasm. It carries out the reaction apo-[ACP] + CoA = holo-[ACP] + adenosine 3',5'-bisphosphate + H(+). Functionally, transfers the 4'-phosphopantetheine moiety from coenzyme A to a Ser of acyl-carrier-protein. The polypeptide is Holo-[acyl-carrier-protein] synthase (Anaeromyxobacter dehalogenans (strain 2CP-C)).